The primary structure comprises 90 residues: MAVKIRLKRMGAKKSPFYRIVVADSRSPRDGRFIETVGTYNPVAKPAEVKIDEELALKWLQTGAKPSDTVRNLFSSQGIMEKFHNAKQGK.

The protein belongs to the bacterial ribosomal protein bS16 family. In terms of assembly, part of the 30S ribosomal subunit.

This is Small ribosomal subunit protein bS16 from Bacillus subtilis (strain 168).